Here is a 364-residue protein sequence, read N- to C-terminus: UDP-N-acetylglucosamine--N-acetylmuramyl-(pentapeptide) pyrophosphoryl-undecaprenol N-acetylglucosamine transferase (364 aa).

UDP-N-acetyl-alpha-D-glucosamine-binding positions include 19 to 21 (TGG), asparagine 131, arginine 167, serine 195, isoleucine 250, and glutamine 295.

Belongs to the glycosyltransferase 28 family. MurG subfamily.

It is found in the cell inner membrane. It carries out the reaction di-trans,octa-cis-undecaprenyl diphospho-N-acetyl-alpha-D-muramoyl-L-alanyl-D-glutamyl-meso-2,6-diaminopimeloyl-D-alanyl-D-alanine + UDP-N-acetyl-alpha-D-glucosamine = di-trans,octa-cis-undecaprenyl diphospho-[N-acetyl-alpha-D-glucosaminyl-(1-&gt;4)]-N-acetyl-alpha-D-muramoyl-L-alanyl-D-glutamyl-meso-2,6-diaminopimeloyl-D-alanyl-D-alanine + UDP + H(+). It functions in the pathway cell wall biogenesis; peptidoglycan biosynthesis. In terms of biological role, cell wall formation. Catalyzes the transfer of a GlcNAc subunit on undecaprenyl-pyrophosphoryl-MurNAc-pentapeptide (lipid intermediate I) to form undecaprenyl-pyrophosphoryl-MurNAc-(pentapeptide)GlcNAc (lipid intermediate II). The polypeptide is UDP-N-acetylglucosamine--N-acetylmuramyl-(pentapeptide) pyrophosphoryl-undecaprenol N-acetylglucosamine transferase (Xylella fastidiosa (strain Temecula1 / ATCC 700964)).